The primary structure comprises 263 residues: uncharacterized protein (263 aa).

Residues 72–168 (LDKKETKELS…RTIVEIRNTK (97 aa)) adopt a coiled-coil conformation. The segment at 76-158 (ETKELSKKEK…EKKEKKEKED (83 aa)) is disordered. A compositionally biased stretch (basic residues) spans 83–95 (KEKKQLKKEKKAL). A compositionally biased stretch (basic and acidic residues) spans 96–107 (KKENKGGKDKKD). A compositionally biased stretch (basic residues) spans 108-121 (KKDKKDKKDKKDKK). Basic and acidic residues-rich tracts occupy residues 122–131 (DKKDKGDKKD) and 139–158 (KHDDDKSEVKEKKEKKEKED).

This is an uncharacterized protein from Dictyostelium discoideum (Social amoeba).